A 335-amino-acid polypeptide reads, in one-letter code: Holliday junction branch migration complex subunit RuvB (335 aa).

Positions 1–181 (MTRILDNDLI…FGITGHMEYY (181 aa)) are large ATPase domain (RuvB-L). ATP-binding positions include L20, R21, G62, K65, T66, T67, 128 to 130 (EDF), R171, Y181, and R218. Residue T66 coordinates Mg(2+). The interval 182-252 (QTADLTEIVE…ITDKALTMLD (71 aa)) is small ATPAse domain (RuvB-S). The interval 255–335 (QEGLDYVDQK…GYPYEKTIKT (81 aa)) is head domain (RuvB-H). Residues R291, R310, R312, and R315 each coordinate DNA.

Belongs to the RuvB family. As to quaternary structure, homohexamer. Forms an RuvA(8)-RuvB(12)-Holliday junction (HJ) complex. HJ DNA is sandwiched between 2 RuvA tetramers; dsDNA enters through RuvA and exits via RuvB. An RuvB hexamer assembles on each DNA strand where it exits the tetramer. Each RuvB hexamer is contacted by two RuvA subunits (via domain III) on 2 adjacent RuvB subunits; this complex drives branch migration. In the full resolvosome a probable DNA-RuvA(4)-RuvB(12)-RuvC(2) complex forms which resolves the HJ.

The protein resides in the cytoplasm. The catalysed reaction is ATP + H2O = ADP + phosphate + H(+). Functionally, the RuvA-RuvB-RuvC complex processes Holliday junction (HJ) DNA during genetic recombination and DNA repair, while the RuvA-RuvB complex plays an important role in the rescue of blocked DNA replication forks via replication fork reversal (RFR). RuvA specifically binds to HJ cruciform DNA, conferring on it an open structure. The RuvB hexamer acts as an ATP-dependent pump, pulling dsDNA into and through the RuvAB complex. RuvB forms 2 homohexamers on either side of HJ DNA bound by 1 or 2 RuvA tetramers; 4 subunits per hexamer contact DNA at a time. Coordinated motions by a converter formed by DNA-disengaged RuvB subunits stimulates ATP hydrolysis and nucleotide exchange. Immobilization of the converter enables RuvB to convert the ATP-contained energy into a lever motion, pulling 2 nucleotides of DNA out of the RuvA tetramer per ATP hydrolyzed, thus driving DNA branch migration. The RuvB motors rotate together with the DNA substrate, which together with the progressing nucleotide cycle form the mechanistic basis for DNA recombination by continuous HJ branch migration. Branch migration allows RuvC to scan DNA until it finds its consensus sequence, where it cleaves and resolves cruciform DNA. This is Holliday junction branch migration complex subunit RuvB from Streptococcus equi subsp. equi (strain 4047).